The chain runs to 519 residues: C-glycoside 3-oxidase (519 aa).

Residue E41 coordinates FAD. Residues 43 to 93 form a disordered region; the sequence is GPTVSNPPGAHVKNIEDPERRSHAQRASEGPGAGAETVNSPGAVKSGERRA. Positions 55–64 are enriched in basic and acidic residues; it reads KNIEDPERRS. FAD-binding residues include S118, N120, M124, T129, A131, and V234. Catalysis depends on H440, which acts as the Proton acceptor. N474 and T486 together coordinate FAD.

Belongs to the GMC oxidoreductase family. In terms of assembly, monomer. Requires FAD as cofactor.

The enzyme catalyses isovitexin + O2 = 3''-dehydroisovitexin + H2O2. It catalyses the reaction isoorientin + O2 = 3''-dehydroisoorientin + H2O2. The catalysed reaction is mangiferin + O2 = 3'-dehydromangiferin + H2O2. Its function is as follows. FAD-dependent C-glycoside-metabolizing enzyme that participates in the degradation of certain C-glycosides by catalyzing the oxidation of the hydroxyl group at the C3 position of the sugar moiety. Shows oxidase activity toward various C-glycosides such as isovitexin, isoorientin and mangiferin but cannot use carminic acid, puerarin, orientin or aloesin. Shows weak activity (100 to 1000-fold lower) with O-glycosides. Probably plays a crucial role in the metabolism of C-glycosides in nature. In Arthrobacter globiformis (strain ATCC 8010 / DSM 20124 / JCM 1332 / NBRC 12137 / NCIMB 8907 / NRRL B-2979 / 168), this protein is C-glycoside 3-oxidase.